We begin with the raw amino-acid sequence, 692 residues long: ABC1 family protein C21C3.03, mitochondrial (692 aa).

Residues 1–91 (MISFSHWNSH…RKFTTRQKSE (91 aa)) constitute a mitochondrion transit peptide. The next 2 membrane-spanning stretches (helical) occupy residues 96-116 (WRILRITFLVLPFTVGGLWIL) and 161-181 (LFIIFSPIIITLPFIALISFL).

This sequence belongs to the protein kinase superfamily. ADCK protein kinase family.

The protein resides in the mitochondrion membrane. This chain is ABC1 family protein C21C3.03, mitochondrial, found in Schizosaccharomyces pombe (strain 972 / ATCC 24843) (Fission yeast).